Here is a 123-residue protein sequence, read N- to C-terminus: Small ribosomal subunit protein uS12 (123 aa).

Residues 1–27 (MPTIQQLIRKPRQPKIKRSKSMHLQEC) are disordered. Basic residues predominate over residues 9–21 (RKPRQPKIKRSKS). Residue aspartate 89 is modified to 3-methylthioaspartic acid.

It belongs to the universal ribosomal protein uS12 family. Part of the 30S ribosomal subunit. Contacts proteins S8 and S17. May interact with IF1 in the 30S initiation complex.

Its function is as follows. With S4 and S5 plays an important role in translational accuracy. Interacts with and stabilizes bases of the 16S rRNA that are involved in tRNA selection in the A site and with the mRNA backbone. Located at the interface of the 30S and 50S subunits, it traverses the body of the 30S subunit contacting proteins on the other side and probably holding the rRNA structure together. The combined cluster of proteins S8, S12 and S17 appears to hold together the shoulder and platform of the 30S subunit. This chain is Small ribosomal subunit protein uS12, found in Roseobacter denitrificans (strain ATCC 33942 / OCh 114) (Erythrobacter sp. (strain OCh 114)).